Consider the following 464-residue polypeptide: Cytochrome P450 85A1 (464 aa).

A helical membrane pass occupies residues 2 to 22 (AFFLIFLSSFFGLCIFCTALL). C414 is a binding site for heme.

It belongs to the cytochrome P450 family. The cofactor is heme. Expressed in sub-meristematic regions of shoot and root apexes, in zones undergoing lateral root formation, in fruits, and in all flower parts, with a high expression in young flower buds and at the joint in the pedicel.

The protein localises to the membrane. The catalysed reaction is 6-deoxocastasterone + reduced [NADPH--hemoprotein reductase] + O2 = 6alpha-hydroxycastasterone + oxidized [NADPH--hemoprotein reductase] + H2O + H(+). It carries out the reaction 6alpha-hydroxycastasterone + reduced [NADPH--hemoprotein reductase] + O2 = castasterone + oxidized [NADPH--hemoprotein reductase] + 2 H2O + H(+). It catalyses the reaction 6-deoxocastasterone + 2 reduced [NADPH--hemoprotein reductase] + 2 O2 = castasterone + 2 oxidized [NADPH--hemoprotein reductase] + 3 H2O + 2 H(+). Its pathway is plant hormone biosynthesis; brassinosteroid biosynthesis. Functionally, catalyzes the C6-oxidation step in brassinosteroids biosynthesis. Converts 6-deoxocastasterone (6-deoxoCS) to castasterone (CS). May also convert 6-deoxoteasterone (6-deoxoTE) to teasterone (TE), 3-dehydro-6-deoxoteasterone (6-deoxo3DT, 6-deoxo3DHT) to 3-dehydroteasterone (3DT, 3-DHT), and 6-deoxotyphasterol (6-deoxoTY) to typhasterol (TY), but not castasterone (CS) to brassinolide (BL). The protein is Cytochrome P450 85A1 of Solanum lycopersicum (Tomato).